Consider the following 864-residue polypeptide: Alanine--tRNA ligase (864 aa).

His-534, His-538, Cys-639, and His-643 together coordinate Zn(2+).

The protein belongs to the class-II aminoacyl-tRNA synthetase family. The cofactor is Zn(2+).

It is found in the cytoplasm. It catalyses the reaction tRNA(Ala) + L-alanine + ATP = L-alanyl-tRNA(Ala) + AMP + diphosphate. Functionally, catalyzes the attachment of alanine to tRNA(Ala) in a two-step reaction: alanine is first activated by ATP to form Ala-AMP and then transferred to the acceptor end of tRNA(Ala). Also edits incorrectly charged Ser-tRNA(Ala) and Gly-tRNA(Ala) via its editing domain. This Aster yellows witches'-broom phytoplasma (strain AYWB) protein is Alanine--tRNA ligase.